Consider the following 437-residue polypeptide: Trigger factor (437 aa).

Residues 164-249 (GDFAKFDFEG…LHEIQCKKIG (86 aa)) form the PPIase FKBP-type domain.

Belongs to the FKBP-type PPIase family. Tig subfamily.

Its subcellular location is the cytoplasm. The enzyme catalyses [protein]-peptidylproline (omega=180) = [protein]-peptidylproline (omega=0). Functionally, involved in protein export. Acts as a chaperone by maintaining the newly synthesized protein in an open conformation. Functions as a peptidyl-prolyl cis-trans isomerase. The polypeptide is Trigger factor (Campylobacter hominis (strain ATCC BAA-381 / DSM 21671 / CCUG 45161 / LMG 19568 / NCTC 13146 / CH001A)).